Consider the following 193-residue polypeptide: Guanylate kinase (193 aa).

Residues 8 to 188 (GRLVVLVGPS…ACEQLVSLFV (181 aa)) form the Guanylate kinase-like domain. ATP is bound at residue 15 to 22 (GPSAVGKS).

The protein belongs to the guanylate kinase family.

It is found in the cytoplasm. It carries out the reaction GMP + ATP = GDP + ADP. In terms of biological role, essential for recycling GMP and indirectly, cGMP. In Nocardia farcinica (strain IFM 10152), this protein is Guanylate kinase.